Reading from the N-terminus, the 410-residue chain is Phosphoglycerate kinase (410 aa).

Residues 19–21 (DLN), R34, 57–60 (HQGK), R114, and R154 each bind substrate. ATP contacts are provided by residues E332 and 358–361 (GGHS).

This sequence belongs to the phosphoglycerate kinase family. Homodimer.

It is found in the cytoplasm. The catalysed reaction is (2R)-3-phosphoglycerate + ATP = (2R)-3-phospho-glyceroyl phosphate + ADP. The protein operates within carbohydrate degradation; glycolysis; pyruvate from D-glyceraldehyde 3-phosphate: step 2/5. In Pyrococcus abyssi (strain GE5 / Orsay), this protein is Phosphoglycerate kinase (pgk).